The sequence spans 523 residues: 2-isopropylmalate synthase (523 aa).

One can recognise a Pyruvate carboxyltransferase domain in the interval 5–267; that stretch reads VIIFDTTLRD…HTRINHQEIW (263 aa). Residues aspartate 14, histidine 202, histidine 204, and asparagine 238 each coordinate Mn(2+). Residues 392–523 are regulatory domain; that stretch reads RLEYFSVQSG…QNKEHNQETV (132 aa).

Belongs to the alpha-IPM synthase/homocitrate synthase family. LeuA type 1 subfamily. Homodimer. Mn(2+) serves as cofactor.

It localises to the cytoplasm. The catalysed reaction is 3-methyl-2-oxobutanoate + acetyl-CoA + H2O = (2S)-2-isopropylmalate + CoA + H(+). It functions in the pathway amino-acid biosynthesis; L-leucine biosynthesis; L-leucine from 3-methyl-2-oxobutanoate: step 1/4. Catalyzes the condensation of the acetyl group of acetyl-CoA with 3-methyl-2-oxobutanoate (2-ketoisovalerate) to form 3-carboxy-3-hydroxy-4-methylpentanoate (2-isopropylmalate). This is 2-isopropylmalate synthase from Cronobacter sakazakii (strain ATCC BAA-894) (Enterobacter sakazakii).